The sequence spans 190 residues: UPF0301 protein DP2218 (190 aa).

This sequence belongs to the UPF0301 (AlgH) family.

The sequence is that of UPF0301 protein DP2218 from Desulfotalea psychrophila (strain LSv54 / DSM 12343).